Here is a 212-residue protein sequence, read N- to C-terminus: Ribosomal RNA small subunit methyltransferase G (212 aa).

Residues Gly80, Leu85, 131 to 132 (AE), and Arg146 each bind S-adenosyl-L-methionine.

It belongs to the methyltransferase superfamily. RNA methyltransferase RsmG family.

Its subcellular location is the cytoplasm. It catalyses the reaction guanosine(527) in 16S rRNA + S-adenosyl-L-methionine = N(7)-methylguanosine(527) in 16S rRNA + S-adenosyl-L-homocysteine. Its function is as follows. Specifically methylates the N7 position of guanine in position 527 of 16S rRNA. This chain is Ribosomal RNA small subunit methyltransferase G, found in Xanthomonas euvesicatoria pv. vesicatoria (strain 85-10) (Xanthomonas campestris pv. vesicatoria).